The chain runs to 380 residues: Crotonobetainyl-CoA reductase (380 aa).

It belongs to the acyl-CoA dehydrogenase family. As to quaternary structure, homotetramer. FAD is required as a cofactor.

It localises to the cytoplasm. The catalysed reaction is 4-(trimethylamino)butanoyl-CoA + oxidized [electron-transfer flavoprotein] + H(+) = crotonobetainyl-CoA + reduced [electron-transfer flavoprotein]. It participates in amine and polyamine metabolism; carnitine metabolism. Catalyzes the reduction of crotonobetainyl-CoA to gamma-butyrobetainyl-CoA. This Shigella flexneri serotype 5b (strain 8401) protein is Crotonobetainyl-CoA reductase.